A 200-amino-acid chain; its full sequence is Small ribosomal subunit protein uS4 (200 aa).

The segment at 22-42 (TGKELEKRPYAPGPHGPGQRK) is disordered. The region spanning 92–152 (SRLDNIVYRL…EKSQNLSVVK (61 aa)) is the S4 RNA-binding domain.

It belongs to the universal ribosomal protein uS4 family. As to quaternary structure, part of the 30S ribosomal subunit. Contacts protein S5. The interaction surface between S4 and S5 is involved in control of translational fidelity.

Its function is as follows. One of the primary rRNA binding proteins, it binds directly to 16S rRNA where it nucleates assembly of the body of the 30S subunit. Functionally, with S5 and S12 plays an important role in translational accuracy. The chain is Small ribosomal subunit protein uS4 from Bacillus licheniformis (strain ATCC 14580 / DSM 13 / JCM 2505 / CCUG 7422 / NBRC 12200 / NCIMB 9375 / NCTC 10341 / NRRL NRS-1264 / Gibson 46).